A 298-amino-acid polypeptide reads, in one-letter code: UDP-N-acetylenolpyruvoylglucosamine reductase (298 aa).

The FAD-binding PCMH-type domain maps to 26–191 (KTGGAADVFV…LDATFSLALE (166 aa)). Residue Arg170 is part of the active site. Ser220 (proton donor) is an active-site residue. Residue Glu290 is part of the active site.

Belongs to the MurB family. FAD is required as a cofactor.

The protein localises to the cytoplasm. The catalysed reaction is UDP-N-acetyl-alpha-D-muramate + NADP(+) = UDP-N-acetyl-3-O-(1-carboxyvinyl)-alpha-D-glucosamine + NADPH + H(+). Its pathway is cell wall biogenesis; peptidoglycan biosynthesis. In terms of biological role, cell wall formation. This Listeria monocytogenes serovar 1/2a (strain ATCC BAA-679 / EGD-e) protein is UDP-N-acetylenolpyruvoylglucosamine reductase.